The following is a 280-amino-acid chain: 3-phenylpropionate-dihydrodiol/cinnamic acid-dihydrodiol dehydrogenase (280 aa).

S143 is a substrate binding site. The active-site Proton acceptor is Y156.

Belongs to the short-chain dehydrogenases/reductases (SDR) family.

It carries out the reaction 3-(cis-5,6-dihydroxycyclohexa-1,3-dien-1-yl)propanoate + NAD(+) = 3-(2,3-dihydroxyphenyl)propanoate + NADH + H(+). The catalysed reaction is (2E)-3-(cis-5,6-dihydroxycyclohexa-1,3-dien-1-yl)prop-2-enoate + NAD(+) = (2E)-3-(2,3-dihydroxyphenyl)prop-2-enoate + NADH + H(+). It functions in the pathway aromatic compound metabolism; 3-phenylpropanoate degradation. Functionally, converts 3-phenylpropionate-dihydrodiol (PP-dihydrodiol) and cinnamic acid-dihydrodiol (CI-dihydrodiol) into 3-(2,3-dihydroxylphenyl)propanoic acid (DHPP) and 2,3-dihydroxicinnamic acid (DHCI), respectively. The chain is 3-phenylpropionate-dihydrodiol/cinnamic acid-dihydrodiol dehydrogenase from Photorhabdus laumondii subsp. laumondii (strain DSM 15139 / CIP 105565 / TT01) (Photorhabdus luminescens subsp. laumondii).